We begin with the raw amino-acid sequence, 1231 residues long: Chromosome-associated kinesin KIF4 (1231 aa).

The Kinesin motor domain maps to 9–337 (PVRVALRCRP…LRYADRARKI (329 aa)). 88–95 (GQTGSGKT) serves as a coordination point for ATP. A coiled-coil region spans residues 351 to 1000 (ELNHLKQQVQ…IKQKLTLLQV (650 aa)). A Phosphoserine modification is found at serine 395. Threonine 800 carries the post-translational modification Phosphothreonine. 3 positions are modified to phosphoserine: serine 802, serine 811, and serine 816. Residues 1001–1231 (ASKQKPHLTR…GCSPIQEESH (231 aa)) are globular. Positions 1189–1212 (HPELKSIASESQENKAIGKKKKRA) are disordered. Phosphoserine occurs at positions 1224 and 1230.

The protein belongs to the TRAFAC class myosin-kinesin ATPase superfamily. Kinesin family. Chromokinesin subfamily. [2Fe-2S] cluster is required as a cofactor. It depends on [4Fe-4S] cluster as a cofactor. In terms of tissue distribution, expressed in pyramidal cells in juvenile hippocampus, granular cells in juvenile cerebellar cortex and in adult spleen.

It is found in the nucleus. The protein resides in the chromosome. It localises to the cytoplasm. The protein localises to the cytoskeleton. Its function is as follows. Iron-sulfur (Fe-S) cluster binding motor protein that has a role in chromosome segregation during mitosis. Required for mitotic chromosomal positioning and bipolar spindle stabilization. This Mus musculus (Mouse) protein is Chromosome-associated kinesin KIF4 (Kif4).